A 793-amino-acid chain; its full sequence is Ribosome biogenesis protein BOP1 homolog (793 aa).

The segment covering 1-11 (MTKKLTLKRKG) has biased composition (basic residues). A disordered region spans residues 1-168 (MTKKLTLKRK…DSDTSDEEDI (168 aa)). Acidic residues-rich tracts occupy residues 44 to 53 (EDTTDDEGID), 60 to 72 (SSEDLEFESDEEG), and 83 to 116 (SSEEEDDDGDEEGEEEDEEEDDSEDGESADDGDE). Over residues 117–129 (EKPTTSKQNKSED) the composition is skewed to basic and acidic residues. A compositionally biased stretch (polar residues) spans 133–143 (SSKVSKKTQPP). The segment covering 146-161 (DLVKRDPSHPEYHDSD) has biased composition (basic and acidic residues). WD repeat units lie at residues 454–495 (GHTD…RTIE), 497–535 (EDVVRCVAWCPNAKLSIIAVATGNRLLLINPKVGDKVLV), 579–621 (NHFK…SQIP), 624–662 (KSKGLIQCVLFHPVKPCFFVATQHNIRIYDLVKQELVKK), 665–704 (TNSKWISGMSIHPKGDNLLVSTYDKKMLWFDLDLSTKPYQ), 708–747 (LHRNAVRSVAFHLRYPLFASGSDDQAVIVSHGMVYNDLLQ), and 763–793 (REDFGVLDVNWHPIQPWIFSTGADCTIRLYT).

Belongs to the WD repeat BOP1/ERB1 family.

It is found in the nucleus. The protein resides in the nucleolus. The protein localises to the nucleoplasm. Its function is as follows. Required for maturation of ribosomal RNAs and formation of the large ribosomal subunit. The protein is Ribosome biogenesis protein BOP1 homolog of Drosophila ananassae (Fruit fly).